The primary structure comprises 268 residues: Proenkephalin-A (268 aa).

The N-terminal stretch at 1–24 (MARFLRLCTWLLVLGSCLLATVQA) is a signal peptide. Intrachain disulfides connect C26–C48, C30–C52, and C33–C65. Residues 162-185 (GTGDNRAREGRHQESTDNDDNMSK) are disordered. The span at 166–176 (NRAREGRHQES) shows a compositional bias: basic and acidic residues. Propeptides lie at residues 197–208 (SPQVEDEAKELQ) and 218–228 (VGRPEWWMDYQ). A Phosphoserine modification is found at S252.

It belongs to the opioid neuropeptide precursor family. In terms of processing, proenkephalin-A is cleaved by CTSL to generate Met-enkephalin. Processed and degraded by ACE. Post-translationally, probably cleaved by ACE. In terms of processing, processed by ACE to generate Met-enkephalin in the nucleus accumbens of the brain. The N-terminal domain contains 6 conserved cysteines thought to be involved in disulfide bonding and/or processing.

It localises to the cytoplasmic vesicle. It is found in the secretory vesicle. The protein localises to the chromaffin granule lumen. The protein resides in the secreted. Neuropeptide that competes with and mimic the effects of opiate drugs. They play a role in a number of physiologic functions, including pain perception and responses to stress. Functionally, met-enkephalin-Arg-Phe neuropeptide acts as a strong ligand of Mu-type opioid receptor OPRM1. Met-enkephalin-Arg-Phe-binding to OPRM1 in the nucleus accumbens of the brain increases activation of OPRM1, leading to long-term synaptic depression of glutamate release. Its function is as follows. Increases glutamate release in the striatum and decreases GABA concentration in the striatum. In terms of biological role, increases glutamate release in the striatum. This Mesocricetus auratus (Golden hamster) protein is Proenkephalin-A (PENK).